A 579-amino-acid polypeptide reads, in one-letter code: SHC-transforming protein 1 (579 aa).

Position 1 is an N-acetylmethionine (M1). A disordered region spans residues 1–137 (MDLLPPKPKY…QLGGEEWTRH (137 aa)). Positions 16 to 44 (ESLSSLEEGASGSTPPEELPSPSASSLGP) are enriched in low complexity. Phosphoserine is present on residues S36 and S139. Residue K154 is modified to N6-acetyllysine. The 184-residue stretch at 156 to 339 (MGPGVSYLVR…AGFDGSAWDE (184 aa)) folds into the PID domain. The interval 337–357 (WDEEEEEPPDHQYYNDFPGKE) is disordered. The tract at residues 340–483 (EEEEPPDHQY…SMAEQLQGEP (144 aa)) is CH1. Phosphotyrosine is present on residues Y349, Y350, and Y423. Residues 432-451 (ARQAGGGAGPPNPSLNGSAP) form a disordered region. S449 carries the phosphoserine modification. Positions 484–575 (WFHGKLSRRE…GSELCLQQPV (92 aa)) constitute an SH2 domain.

As to quaternary structure, interacts with CPNE3; this interaction may mediate the binding of CPNE3 with ERBB2. Interacts with the NPXY motif of tyrosine-phosphorylated IGF1R and INSR in vitro via the PID domain. Once activated, binds to GRB2. Interacts with tyrosine-phosphorylated DDR2 and CD3T. Interacts with the N-terminal region of APS. Interacts with GRB7 and KIT. Interacts with PTK2/FAK1. Interacts with phosphorylated LRP1 and IRS4. Interacts with FLT4 (tyrosine-phosphorylated). Interacts with PDGFRB (tyrosine-phosphorylated). Interacts with ERBB4. Interacts with TEK/TIE2 (tyrosine-phosphorylated). Interacts with ALK, GAB2, TRIM31, INPP5D/SHIP1 and INPPL1/SHIP2. Interacts with PTPN6/SHP (tyrosine phosphorylated). Identified in a complex containing FGFR4, NCAM1, CDH2, PLCG1, FRS2, SRC, SHC1, GAP43 and CTTN. Interacts with EPHB1 and GRB2; activates the MAPK/ERK cascade to regulate cell migration. Interacts with the Trk receptors NTRK1, NTRK2 and NTRK3; in a phosphotyrosine-dependent manner. Interacts with CEACAM1; this interaction is CEACAM1-phosphorylation-dependent and mediates interaction with EGFR or INSR resulting in decrease coupling of SHC1 to the MAPK3/ERK1-MAPK1/ERK2 pathway. Interacts (via PID domain) with PEAK1 (when phosphorylated at 'Tyr-1177'). Found in a complex with PPP1CA, PPP1CC, SHC1 and PEAK1. In terms of processing, phosphorylated in response to FLT4 signaling. Tyrosine phosphorylated by ligand-activated PDGFRB. May be tyrosine phosphorylated by activated PTK2/FAK1. Tyrosine phosphorylated by TEK/TIE2. Tyrosine phosphorylated by activated PTK2B/PYK2. Dephosphorylation by PTPN2 may regulate interaction with GRB2. Phosphorylated by activated epidermal growth factor receptor. Phosphorylated in response to KIT signaling. Isoform p47Shc and isoform p52Shc are phosphorylated on tyrosine residues of the Pro-rich domain. Isoform p66Shc is phosphorylated on Ser-36 by PRKCB upon treatment with insulin, hydrogen peroxide or irradiation with ultraviolet light. FLT3 signaling promotes tyrosine phosphorylation of isoform p47Shc and isoform p52Shc. Also tyrosine phosphorylated by ligand-activated ALK. Widely expressed. Expressed in neural stem cells but absent in mature neurons.

It localises to the cytoplasm. Its subcellular location is the cell junction. The protein localises to the focal adhesion. It is found in the mitochondrion matrix. The protein resides in the mitochondrion. In terms of biological role, signaling adapter that couples activated growth factor receptors to signaling pathways. Participates in signaling downstream of the angiopoietin receptor TEK/TIE2, and plays a role in the regulation of endothelial cell migration and sprouting angiogenesis. Participates in a signaling cascade initiated by activated KIT and KITLG/SCF. Isoform p47Shc and isoform p52Shc, once phosphorylated, couple activated receptor kinases to Ras via the recruitment of the GRB2/SOS complex and are implicated in the cytoplasmic propagation of mitogenic signals. Isoform p47Shc and isoform p52 may thus function as initiators of the Ras signaling cascade in various non-neuronal systems. Isoform p66Shc does not mediate Ras activation, but is involved in signal transduction pathways that regulate the cellular response to oxidative stress and life span. Isoform p66Shc acts as a downstream target of the tumor suppressor p53 and is indispensable for the ability of stress-activated p53 to induce elevation of intracellular oxidants, cytochrome c release and apoptosis. The expression of isoform p66Shc has been correlated with life span. This Mus musculus (Mouse) protein is SHC-transforming protein 1 (Shc1).